Reading from the N-terminus, the 236-residue chain is MVVREASAAQASLSQVLPQLRYLHIFLEQVHTHFQEQSVGERGAAIQLAEGLARQLCTDCQLNKLFYREEFVLATLLDPCFKGKIEAILPWGPTDIDHWKQVLVYKVKEIRVSEYSLNSPSPLQSPRGLCVDPTRVAKSSGVEGRSQGEPLQSSSHSGAFLLAQREKGLLESMGLLASERSGGSLSTKSHWASIIVKKYLWENETVGAQDDPLAYWEKKREAWPPSICLTPHRSLL.

In Homo sapiens (Human), this protein is Putative protein ZBED10P.